The primary structure comprises 114 residues: uncharacterized protein (114 aa).

Helical transmembrane passes span 14 to 34 (VMSAIFKWLLLYSLPALCFLL) and 75 to 95 (VIIILVPCWWHAVIVTQHPVA).

Its subcellular location is the membrane. This is an uncharacterized protein from Homo sapiens (Human).